The sequence spans 388 residues: Processive diacylglycerol beta-glucosyltransferase (388 aa).

The protein belongs to the glycosyltransferase 28 family. UgtP subfamily.

The protein resides in the cell membrane. It catalyses the reaction a 1,2-diacyl-3-O-(beta-D-glucopyranosyl)-sn-glycerol + UDP-alpha-D-glucose = a 1,2-diacyl-3-O-(beta-D-Glc-(1-&gt;6)-beta-D-Glc)-sn-glycerol + UDP + H(+). The catalysed reaction is a 1,2-diacyl-3-O-(beta-D-Glc-(1-&gt;6)-beta-D-Glc)-sn-glycerol + UDP-alpha-D-glucose = a 1,2-diacyl-3-O-(beta-D-Glc-(1-&gt;6)-beta-D-Glc-(1-&gt;6)-beta-D-Glc)-sn-glycerol + UDP + H(+). It carries out the reaction a 1,2-diacyl-sn-glycerol + UDP-alpha-D-glucose = a 1,2-diacyl-3-O-(beta-D-glucopyranosyl)-sn-glycerol + UDP + H(+). The protein operates within glycolipid metabolism; diglucosyl-diacylglycerol biosynthesis. Functionally, processive glucosyltransferase involved in the biosynthesis of both the bilayer- and non-bilayer-forming membrane glucolipids. Is able to successively transfer up to three glucosyl residues to diacylglycerol (DAG), thereby catalyzing the formation of beta-monoglucosyl-DAG (3-O-(beta-D-glucopyranosyl)-1,2-diacyl-sn-glycerol), beta-diglucosyl-DAG (3-O-(beta-D-glucopyranosyl-beta-(1-&gt;6)-D-glucopyranosyl)-1,2-diacyl-sn-glycerol) and beta-triglucosyl-DAG (3-O-(beta-D-glucopyranosyl-beta-(1-&gt;6)-D-glucopyranosyl-beta-(1-&gt;6)-D-glucopyranosyl)-1,2-diacyl-sn-glycerol). Beta-diglucosyl-DAG is the predominant glycolipid found in Bacillales and is also used as a membrane anchor for lipoteichoic acid (LTA). This chain is Processive diacylglycerol beta-glucosyltransferase, found in Bacillus thuringiensis (strain Al Hakam).